The following is a 651-amino-acid chain: Probable potassium transport system protein Kup (651 aa).

12 consecutive transmembrane segments (helical) span residues 30–50 (LALA…LYSL), 71–91 (IISM…VIFV), 124–144 (LLLG…TPAI), 158–178 (PDAE…LFIV), 190–210 (FGPV…PWII), 233–253 (AMAF…EALY), 268–288 (WFGL…AMIL), 310–330 (LVTI…SGAF), 358–378 (IYIP…ILIF), 387–407 (AYGL…LVLA), 413–433 (WPMW…LSIF), and 437–457 (LLKI…VVII).

This sequence belongs to the HAK/KUP transporter (TC 2.A.72) family.

Its subcellular location is the cell membrane. It catalyses the reaction K(+)(in) + H(+)(in) = K(+)(out) + H(+)(out). Transport of potassium into the cell. Likely operates as a K(+):H(+) symporter. In Cutibacterium acnes (strain DSM 16379 / KPA171202) (Propionibacterium acnes), this protein is Probable potassium transport system protein Kup.